The primary structure comprises 294 residues: MPVVTMRQLLDSGVHFGHQTRRWNPKMKRFIFTERNGIYIIDLQQSLSYIDRAYEFVKATVAHGGTVLFVGTKKQAQESIAEQATRVGQPYVNQRWLGGMLTNFQTVSKRIQRMKELEEIDFDDVAGSAYTKKELLLLRRELTKLETNLGGIRNLTKAPSVLWIVDTKKEHLAVDEAKKLNIPVVAILDTNCDPDEVDFPIPGNDDAIRSVNLLTRVVADAVAEGLIARNQRATGTTEAPEEPLAEWERELLEGSKSEEAAAPAAAEEAPAAAEEAPAAAEATESAAGEADAAK.

Positions Arg-232–Lys-294 are disordered. Residues Glu-246–Glu-259 are compositionally biased toward basic and acidic residues. A compositionally biased stretch (low complexity) spans Ala-260–Lys-294.

Belongs to the universal ribosomal protein uS2 family.

This is Small ribosomal subunit protein uS2 from Arthrobacter sp. (strain FB24).